The chain runs to 480 residues: MKKLLMVQGTTSDAGKSVLVAGLCRVLARKGVKVAPFKPQNMALNSAVTKEGGEIGRAQAVQAQACRIEPSVHMNPVLIKPNSDTGAQIILQGKALTNMDAYGFHNYKKVAMDTVMDSFARLKDEYQAIMIEGAGSPAEINLRQNDIANMGFAEEADVPVIIVADIDRGGVFAHLYGTLALLSPSEQARVKGFVINRFRGDIKLLESGLDWLEEKTGKPVIGVLPFLHGLNLEAEDAITSQQALSDEVKLKVVVPVLTRISNHTDFDVLRLHPQIDLRYVGKGERLEHADLIILPGSKSVRDDLRYLREQGWDKDILRHLRFGGKVLGICGGYQMLGESIRDPFGVEGEPGESVGLGLLKTRTELTQDKCLINTKGQLSLNGKHVNVTGYEIHVGRSQVNEYQPITKDDGQLEGALSECGQIMGSYLHGFLDSEAALELICEWVNGVRIKAQNHQQLKEQAIDRIADAIEEHLDLSQLGI.

Residues 249-436 enclose the GATase cobBQ-type domain; that stretch reads KLKVVVPVLT…LHGFLDSEAA (188 aa). Residue Cys-330 is the Nucleophile of the active site. His-428 is an active-site residue.

It belongs to the CobB/CobQ family. CobQ subfamily.

Its pathway is cofactor biosynthesis; adenosylcobalamin biosynthesis. In terms of biological role, catalyzes amidations at positions B, D, E, and G on adenosylcobyrinic A,C-diamide. NH(2) groups are provided by glutamine, and one molecule of ATP is hydrogenolyzed for each amidation. The polypeptide is Cobyric acid synthase (Vibrio vulnificus (strain YJ016)).